Consider the following 198-residue polypeptide: MDRRVCGVDEAGRGPLAGGVYAAAVILDPARPVEGLADSKKLSAARREALAPLIRERALAWCVAWATVEEIDRLNILHATMLAMCRAVDGLAVPPDAIEVDGNRVPPFVLDIPARAIVKGDATVAAISAASILAKTARDAECLELDARYPGYGFAAHKGYPTAAHVAAIERLGVLPVHRRSFGPVKRCLALGQQALEF.

Residues 3-194 (RRVCGVDEAG…VKRCLALGQQ (192 aa)) enclose the RNase H type-2 domain. A divalent metal cation-binding residues include Asp9, Glu10, and Asp101.

This sequence belongs to the RNase HII family. Mn(2+) is required as a cofactor. Requires Mg(2+) as cofactor.

It localises to the cytoplasm. It catalyses the reaction Endonucleolytic cleavage to 5'-phosphomonoester.. Functionally, endonuclease that specifically degrades the RNA of RNA-DNA hybrids. The chain is Ribonuclease HII from Laribacter hongkongensis (strain HLHK9).